Consider the following 1014-residue polypeptide: Pre-mRNA-processing ATP-dependent RNA helicase prp11 (1014 aa).

Positions 1–11 (MSRRTRSRSPP) are enriched in basic residues. The segment at 1–149 (MSRRTRSRSP…SRFDRTERVG (149 aa)) is disordered. Basic and acidic residues-rich tracts occupy residues 15 to 87 (YNRE…EYAR) and 106 to 121 (RHAEEKEVDNKTKSDE). The short motif at 418–446 (TSWSQCGLSAQTISVINSLGYEKPTSIQA) is the Q motif element. One can recognise a Helicase ATP-binding domain in the interval 449–627 (IPAITSGRDV…RKVLKKPVEI (179 aa)). Residue 462 to 469 (AKTGSGKT) coordinates ATP. Positions 575–578 (DEAD) match the DEAD box motif. Positions 638–802 (EVEQIVEVRP…PVPKELQTLA (165 aa)) constitute a Helicase C-terminal domain. A disordered region spans residues 815–875 (KAAGGGFGGK…PEKSTGDPTL (61 aa)). Composition is skewed to basic and acidic residues over residues 827-838 (SRLDETRNAERK) and 855-875 (AEAKSPLEKITPEKSTGDPTL).

Belongs to the DEAD box helicase family. DDX46/PRP5 subfamily.

The protein resides in the nucleus. The catalysed reaction is ATP + H2O = ADP + phosphate + H(+). Its function is as follows. ATP-dependent RNA helicase involved in pre-spliceosome/complex A assembly and mRNA splicing. Bridges U1 and U2 snRNPs during pre-spliceosome assembly and enables stable U2 snRNP association with intron RNA. Through its helicase activity probably catalyzes an ATP-dependent conformational change of U2 snRNP. The chain is Pre-mRNA-processing ATP-dependent RNA helicase prp11 (prp11) from Schizosaccharomyces pombe (strain 972 / ATCC 24843) (Fission yeast).